Here is a 322-residue protein sequence, read N- to C-terminus: ATP-dependent 6-phosphofructokinase (322 aa).

Residue glycine 11 participates in ATP binding. 21–25 (RAVTR) is an ADP binding site. ATP is bound by residues 72 to 73 (RC) and 102 to 105 (GDGS). Aspartate 103 is a Mg(2+) binding site. 127–129 (TID) provides a ligand contact to substrate. The Proton acceptor role is filled by aspartate 129. Arginine 156 serves as a coordination point for ADP. Substrate contacts are provided by residues arginine 164 and 171–173 (MGR). ADP is bound by residues 187 to 189 (GAE), arginine 213, and 215 to 217 (KKH). Residues glutamate 224, arginine 245, and 251 to 254 (HIQR) each bind substrate.

This sequence belongs to the phosphofructokinase type A (PFKA) family. ATP-dependent PFK group I subfamily. Prokaryotic clade 'B1' sub-subfamily. Homotetramer. The cofactor is Mg(2+).

The protein resides in the cytoplasm. It carries out the reaction beta-D-fructose 6-phosphate + ATP = beta-D-fructose 1,6-bisphosphate + ADP + H(+). Its pathway is carbohydrate degradation; glycolysis; D-glyceraldehyde 3-phosphate and glycerone phosphate from D-glucose: step 3/4. Its activity is regulated as follows. Allosterically activated by ADP and other diphosphonucleosides, and allosterically inhibited by phosphoenolpyruvate. Catalyzes the phosphorylation of D-fructose 6-phosphate to fructose 1,6-bisphosphate by ATP, the first committing step of glycolysis. The polypeptide is ATP-dependent 6-phosphofructokinase (Staphylococcus epidermidis (strain ATCC 12228 / FDA PCI 1200)).